The chain runs to 997 residues: MAVAVASGFWIWAAVLLVPAAAVYEDQVGKFDWRQQYVGKIKFASLEFSPGSKKLVVATEKNVIAALNSRTGEILWRHVDKGTAEGAVDAMLVHGQDAITVSNGGRLMRSWETNIGGLNWEITLDTGSFQALGLVGLQESVRYIAVLKKTTLTLHHLSSGHLKWVEHLPESDSILYQMVYSYGSGVVWALGIVPFSHVNIVKFNVEDGEIVQQVRVWTPWLQHLTGACGVVDEAVLVCPDPSSHSLHTLALETEWELRQIPLQSPDLEFGSGFQPQVLPTQPSPVAPSRAQFFLQLSPSHYALLHYHHGAVTLLKNFPQATLVSFATTGEKTVAAVMTCRTEVQKPVSAGDGSVASFPETSGAQDSLACFNQTYTINLYLVETGRRLLDTSISFSLEQKGTRPEQLYIQVFLKKDDSVGYRALVQTQDHLQLFLQQLAGKVVLWSREESLAEVVCLEMVDLPLTGAQAELEGEFGKKAAIQDGLLGMFLKRLSSQLILLQAWTSHLWKMFYDARKPRSQIKNEINIDTLARDEFNLQKMMVTVTASGKLFGIESSSGTILWKQYLPNVKPDSSFKLMVQRTTAHFPHPPQCTLLVKDKETGMSSLFVFNPIFGKWSQVAPPVLKRPILQSLLLPVMDQDYAKVLLLVDDEYKVTAFPATRNVLRQLHELAPSIFFYLVDAEQGRLSGYQLRKDLTTELSWELTIPPEVQRVVKVKGKRSSEHVHSQGRVMGDRSVLYKSLNPNLLAVVTESTDVHHERTFIGIFLIDGVTGRIIHSSVQKKARGPVHLVHSENWVVYQYWNSKARRNELTALELYEGTEQYNATAFSSLDRPQLPQVLQQSYIFPSSISAMEATITERGITSRHLLIGLPSGAILSLPKALLDPRRPEIPTEQSREENLIPYSPDVQVHAERFINYNQTVSRMRGIYTAPSGLESTCLVVAYGLDIYQTRVYPSKQFDVLKDDYDYVLISSVLFGLVFATMITKRLAQVKLLNRAWR.

Residues 1 to 23 form the signal peptide; the sequence is MAVAVASGFWIWAAVLLVPAAAV. Residues 24-966 are Lumenal-facing; that stretch reads YEDQVGKFDW…FDVLKDDYDY (943 aa). Disulfide bonds link cysteine 228–cysteine 238 and cysteine 339–cysteine 369. The N-linked (GlcNAc...) asparagine glycan is linked to asparagine 917. Residues 967 to 987 traverse the membrane as a helical segment; the sequence is VLISSVLFGLVFATMITKRLA. Residues 988–997 are Cytoplasmic-facing; that stretch reads QVKLLNRAWR.

The protein belongs to the EMC1 family. As to quaternary structure, component of the ER membrane protein complex (EMC).

The protein localises to the endoplasmic reticulum membrane. In terms of biological role, part of the endoplasmic reticulum membrane protein complex (EMC) that enables the energy-independent insertion into endoplasmic reticulum membranes of newly synthesized membrane proteins. Preferentially accommodates proteins with transmembrane domains that are weakly hydrophobic or contain destabilizing features such as charged and aromatic residues. Involved in the cotranslational insertion of multi-pass membrane proteins in which stop-transfer membrane-anchor sequences become ER membrane spanning helices. It is also required for the post-translational insertion of tail-anchored/TA proteins in endoplasmic reticulum membranes. By mediating the proper cotranslational insertion of N-terminal transmembrane domains in an N-exo topology, with translocated N-terminus in the lumen of the ER, controls the topology of multi-pass membrane proteins like the G protein-coupled receptors. By regulating the insertion of various proteins in membranes, it is indirectly involved in many cellular processes. This Mus musculus (Mouse) protein is ER membrane protein complex subunit 1 (Emc1).